The sequence spans 404 residues: Cysteine desulfurase IscS (404 aa).

Residues 75-76 (AT), Asn-155, Gln-183, and 203-205 (SAH) each bind pyridoxal 5'-phosphate. Lys-206 is modified (N6-(pyridoxal phosphate)lysine). Residue Thr-243 coordinates pyridoxal 5'-phosphate. Catalysis depends on Cys-328, which acts as the Cysteine persulfide intermediate. Cys-328 lines the [2Fe-2S] cluster pocket.

This sequence belongs to the class-V pyridoxal-phosphate-dependent aminotransferase family. NifS/IscS subfamily. In terms of assembly, homodimer. Forms a heterotetramer with IscU, interacts with other sulfur acceptors. Requires pyridoxal 5'-phosphate as cofactor.

The protein localises to the cytoplasm. The enzyme catalyses (sulfur carrier)-H + L-cysteine = (sulfur carrier)-SH + L-alanine. The protein operates within cofactor biosynthesis; iron-sulfur cluster biosynthesis. Its function is as follows. Master enzyme that delivers sulfur to a number of partners involved in Fe-S cluster assembly, tRNA modification or cofactor biosynthesis. Catalyzes the removal of elemental sulfur atoms from cysteine to produce alanine. Functions as a sulfur delivery protein for Fe-S cluster synthesis onto IscU, an Fe-S scaffold assembly protein, as well as other S acceptor proteins. In Ectopseudomonas mendocina (strain ymp) (Pseudomonas mendocina), this protein is Cysteine desulfurase IscS.